The sequence spans 187 residues: Casparian strip membrane protein 5 (187 aa).

Over 1–24 the chain is Cytoplasmic; it reads MKSGQAEIMETSKGIQKSGLMSRR. Residues 25–45 form a helical membrane-spanning segment; sequence IAILEFILRIVAFFNTIGSAI. The Extracellular segment spans residues 46-74; it reads LMGTTHETLPFFTQFIRFQAEYNDLPALT. Residues 75-95 traverse the membrane as a helical segment; the sequence is FFVVANAVVSGYLILSLTLAF. The Cytoplasmic segment spans residues 96 to 107; it reads VHIVKRKTQNTR. Residues 108–128 form a helical membrane-spanning segment; that stretch reads ILLIILDVAMLGLLTSGASSA. Topologically, residues 129 to 161 are extracellular; it reads AAIVYLAHNGNNKTNWFAICQQFNSFCERISGS. N-linked (GlcNAc...) asparagine glycosylation is present at Asn-140. The chain crosses the membrane as a helical span at residues 162-182; sequence LIGSFIAIVLLILLILLSAIA. The Cytoplasmic portion of the chain corresponds to 183–187; the sequence is LSRRH.

This sequence belongs to the Casparian strip membrane proteins (CASP) family. In terms of assembly, homodimer and heterodimers with other CASP proteins. Interacts with CASP1, CASP3 and CASP4.

Its subcellular location is the cell membrane. In terms of biological role, regulates membrane-cell wall junctions and localized cell wall deposition. Required for establishment of the Casparian strip membrane domain (CSD) and the subsequent formation of Casparian strips, a cell wall modification of the root endodermis that determines an apoplastic barrier between the intraorganismal apoplasm and the extraorganismal apoplasm and prevents lateral diffusion. This chain is Casparian strip membrane protein 5 (CASP5), found in Arabidopsis thaliana (Mouse-ear cress).